A 1230-amino-acid polypeptide reads, in one-letter code: Cullin-associated NEDD8-dissociated protein 1 (1230 aa).

A2 carries the post-translational modification N-acetylalanine. HEAT repeat units lie at residues 2–39, 44–81, 83–119, 131–165, 171–208, 210–247, 248–282, 289–366, 370–407, 424–467, 471–510, and 515–552; these read ASAS…KDSI, DSER…KVKE, QVET…ELPP, CKKI…LSRQ, NFHP…SCGN, VFVD…QAGH, RIGE…FESF, EVYP…TRHE, EFYK…QTRP, PLTM…VLPG, QHIP…NHSP, and PHVQ…VIRP. Position 55 is an N6-acetyllysine (K55). Residues 315–344 form a disordered region; the sequence is DEDEDENAMDADGGDDDDQGSDDEYSDDDD. At S335 the chain carries Phosphoserine. The residue at position 558 (S558) is a Phosphoserine. HEAT repeat units follow at residues 563-602, 606-643, 646-683, 688-725, 729-768, 770-808, 809-845, 852-889, 890-927, 928-960, 961-998, 1002-1039, 1043-1097, 1099-1133, and 1140-1189; these read PYIK…NLGD, PDLS…LKID, PVLG…NYSD, AMID…VYPS, KISG…TGTN, LGYM…ALTR, ACPK…LGEV, SGQL…GNLP, EYLP…GLKP, YVEN…KLTL, IDPE…DHPQ, PLLK…NKPS, DLLD…DSCL, RLDI…LSTL, and QRLD…IPEA. An N6-acetyllysine modification is found at K971.

Belongs to the CAND family. In terms of assembly, interacts with TBP. Part of a complex that contains CUL1 and RBX1. Interacts with unneddylated cullins: interacts with CUL1, CUL2, CUL3, CUL4A, CUL4B and CUL5. Does not bind neddylated CUL1. Interaction with cullins is abolished in presence of COMMD1, which antagonizes with CAND1 for interacting with cullins. Interacts with ERCC6. Interacts with DCUN1D1, DCUN1D2, DCUN1D3, DCUN1D4 and DCUN1D5; these interactions are bridged by cullins and strongly inhibits the neddylation of cullins. In terms of tissue distribution, detected in heart, brain, spleen, liver, skeletal muscle, kidney and testis.

Its subcellular location is the cytoplasm. It is found in the nucleus. Functionally, key assembly factor of SCF (SKP1-CUL1-F-box protein) E3 ubiquitin ligase complexes that promotes the exchange of the substrate-recognition F-box subunit in SCF complexes, thereby playing a key role in the cellular repertoire of SCF complexes. Acts as a F-box protein exchange factor. The exchange activity of CAND1 is coupled with cycles of neddylation conjugation: in the deneddylated state, cullin-binding CAND1 binds CUL1-RBX1, increasing dissociation of the SCF complex and promoting exchange of the F-box protein. Probably plays a similar role in other cullin-RING E3 ubiquitin ligase complexes. May indirectly enhance transcription from various types of promoters. The sequence is that of Cullin-associated NEDD8-dissociated protein 1 (Cand1) from Rattus norvegicus (Rat).